We begin with the raw amino-acid sequence, 736 residues long: Dynamin-1-like protein (736 aa).

The residue at position 1 (M1) is an N-acetylmethionine. Positions 22–302 (IIQLPQIVVV…LMHHIRDCLP (281 aa)) constitute a Dynamin-type G domain. Residues 32-39 (GTQSSGKS) are G1 motif. Residue 32 to 40 (GTQSSGKSS) coordinates GTP. Residues 58-60 (VTR) form a G2 motif region. The segment at 146-149 (DLPG) is G3 motif. Residues 215–218 (TKLD) are G4 motif. GTP-binding positions include 215–221 (TKLDLMD) and 246–249 (NRSQ). Residues 245–248 (VNRS) are G5 motif. Positions 344-489 (YCNTIEGTAK…NEMVHNLVAI (146 aa)) are middle domain. The interval 448–685 (NYSTQELLRF…NHVKDTLQSE (238 aa)) is interaction with GSK3B. Residues 502–569 (ADACGLMNNN…IQDNRRETKN (68 aa)) are b domain. The tract at residues 522-554 (RELPSAGSRDKSSKVPSALAPASQEPPPAASAE) is disordered. Residue S529 is modified to Phosphoserine. Residues K532, K535, K558, and K568 each participate in a glycyl lysine isopeptide (Lys-Gly) (interchain with G-Cter in SUMO) cross-link. A C-terminal dimerization domain region spans residues 542–736 (PASQEPPPAA…IAEIRETHLW (195 aa)). The disordered stretch occupies residues 566–588 (ETKNVPSAGGGIGDGGQEPTTGN). O-linked (GlcNAc) threonine glycans are attached at residues T585 and T586. K594 participates in a covalent cross-link: Glycyl lysine isopeptide (Lys-Gly) (interchain with G-Cter in SUMO). K597 carries the N6-acetyllysine; alternate modification. A Glycyl lysine isopeptide (Lys-Gly) (interchain with G-Cter in SUMO); alternate cross-link involves residue K597. K606 is covalently cross-linked (Glycyl lysine isopeptide (Lys-Gly) (interchain with G-Cter in SUMO)). Position 607 is a phosphoserine (S607). K608 is covalently cross-linked (Glycyl lysine isopeptide (Lys-Gly) (interchain with G-Cter in SUMO)). S616 bears the Phosphoserine; by PINK1 mark. S637 carries the post-translational modification Phosphoserine; by CAMK1 and PKA. At C644 the chain carries S-nitrosocysteine. The GED domain occupies 644–735 (CEVIERLIKS…IIAEIRETHL (92 aa)). Positions 654-668 (YFLIVRKNIQDSVPK) are important for homodimerization.

This sequence belongs to the TRAFAC class dynamin-like GTPase superfamily. Dynamin/Fzo/YdjA family. As to quaternary structure, homotetramer; dimerizes through the N-terminal GTP-middle region of one molecule binding to the GED domain of another DNM1L molecule. Oligomerizes in a GTP-dependent manner to form membrane-associated tubules with a spiral pattern. Interacts with GSK3B and MARCHF5. Interacts (via the GTPase and B domains) with UBE2I; the interaction promotes sumoylation of DNM1L, mainly in its B domain. Interacts with PPP3CA; the interaction dephosphorylates DNM1L and regulates its transition to mitochondria. Interacts with BCL2L1 isoform BCL-X(L) and CLTA; DNM1L and BCL2L1 isoform BCL-X(L) may form a complex in synaptic vesicles that also contains clathrin and MFF. Interacts with MFF; the interaction is inhibited by C11orf65/MFI. Interacts with FIS1. Interacts with MIEF2 and MIEF1; GTP-dependent, regulates GTP hydrolysis and DNM1L oligomerization. Interacts with PGAM5; this interaction leads to dephosphorylation at Ser-656 and activation of GTPase activity and eventually to mitochondria fragmentation. Interacts with RALBP1; during mitosis, recruits DNM1L to the mitochondrion and mediates its activation by the mitotic kinase cyclin B-CDK1. Interacts with FUNDC1; this interaction recruits DNM1L/DRP1 at ER-mitochondria contact sites. In terms of processing, phosphorylation/dephosphorylation events on two sites near the GED domain regulate mitochondrial fission. Phosphorylation on Ser-637 inhibits mitochondrial fission probably through preventing intramolecular interaction. Dephosphorylated on this site by PPP3CA which promotes mitochondrial fission. Phosphorylation on Ser-616 by Pink1 activates the GTPase activity and promotes mitochondrial fission. Phosphorylated in a circadian manner at Ser-637. Dephosphorylated by PGAM5. Post-translationally, sumoylated on various lysine residues within the B domain, probably by MUL1. Sumoylation positively regulates mitochondrial fission. Desumoylated by SENP5 during G2/M transition of mitosis. Appears to be linked to its catalytic activity. S-nitrosylation increases DNM1L dimerization, mitochondrial fission and causes neuronal damage. In terms of processing, O-GlcNAcylation augments the level of the GTP-bound active form of DNM1L and induces translocation from the cytoplasm to mitochondria in cardiomyocytes. It also decreases phosphorylation at Ser-637. Post-translationally, ubiquitination by MARCHF5 affects mitochondrial morphology. As to expression, expressed in the cerebellum and in several regions of the cerebrum and diencephalon. Strongly expressed in the cerebellar Purkinje cells and in the pontile giant neurons. Widely expressed. In terms of tissue distribution, brain-specific. As to expression, brain-specific (at protein level). Expressed in most of the subregions of the brain, including the cerebellum, midbrain, hippocampus, striatum, cerebral cortex, and brain stem. Weakly expressed in the olfactory bulb.

The protein resides in the cytoplasm. It localises to the cytosol. Its subcellular location is the golgi apparatus. The protein localises to the endomembrane system. It is found in the mitochondrion outer membrane. The protein resides in the peroxisome. It localises to the membrane. Its subcellular location is the clathrin-coated pit. The protein localises to the cytoplasmic vesicle. It is found in the secretory vesicle. The protein resides in the synaptic vesicle membrane. It localises to the lysosome. Its subcellular location is the late endosome. The protein localises to the cell membrane. It is found in the postsynaptic density. The catalysed reaction is GTP + H2O = GDP + phosphate + H(+). Its function is as follows. Functions in mitochondrial and peroxisomal division. Mediates membrane fission through oligomerization into membrane-associated tubular structures that wrap around the scission site to constrict and sever the mitochondrial membrane through a GTP hydrolysis-dependent mechanism. The specific recruitment at scission sites is mediated by membrane receptors like MFF, MIEF1 and MIEF2 for mitochondrial membranes. While the recruitment by the membrane receptors is GTP-dependent, the following hydrolysis of GTP induces the dissociation from the receptors and allows DNM1L filaments to curl into closed rings that are probably sufficient to sever a double membrane. Acts downstream of PINK1 to promote mitochondrial fission in a PRKN-dependent manner. Plays an important role in mitochondrial fission during mitosis. Required for formation of endocytic vesicles. Through its function in mitochondrial division, ensures the survival of at least some types of postmitotic neurons, including Purkinje cells, by suppressing oxidative damage. Required for normal brain development, including that of cerebellum. Facilitates developmentally regulated apoptosis during neural tube formation. Required for a normal rate of cytochrome c release and caspase activation during apoptosis; this requirement may depend upon the cell type and the physiological apoptotic cues. Proposed to regulate synaptic vesicle membrane dynamics through association with BCL2L1 isoform Bcl-X(L) which stimulates its GTPase activity in synaptic vesicles; the function may require its recruitment by MFF to clathrin-containing vesicles. Required for programmed necrosis execution. Rhythmic control of its activity following phosphorylation at Ser-637 is essential for the circadian control of mitochondrial ATP production. In terms of biological role, regulates postsynaptic clathrin-mediated endocytosis by positioning the endocytic zone at the postsynaptic density, independently of mitochondrial division. The chain is Dynamin-1-like protein from Mus musculus (Mouse).